Reading from the N-terminus, the 108-residue chain is Nucleoid-associated protein GK0018 (108 aa).

A disordered region spans residues 1 to 32; the sequence is MMRGGMGNMQKMLKQMQKMQKEMQKAQEELAE. The span at 9 to 18 shows a compositional bias: low complexity; that stretch reads MQKMLKQMQK. The segment covering 19–32 has biased composition (basic and acidic residues); it reads MQKEMQKAQEELAE.

This sequence belongs to the YbaB/EbfC family. As to quaternary structure, homodimer.

Its subcellular location is the cytoplasm. It localises to the nucleoid. Functionally, binds to DNA and alters its conformation. May be involved in regulation of gene expression, nucleoid organization and DNA protection. This chain is Nucleoid-associated protein GK0018, found in Geobacillus kaustophilus (strain HTA426).